We begin with the raw amino-acid sequence, 328 residues long: Basic leucine zipper (bZIP) transcription factor atfB (328 aa).

The interval 1–39 is disordered; the sequence is MLPEQSAFGRSAMPGSDAVNPGPSPFAPPPNSFSGDFLG. Residues 22 to 31 are compositionally biased toward pro residues; it reads GPSPFAPPPN. Residues 163-202 are basic motif; sequence KAKREKFLERNRLAASKCRQKKKEHTQLLESRYREQSDKK. A bZIP domain is found at 163–226; the sequence is KAKREKFLER…LGLKNEVLKH (64 aa). Residues 205–219 are leucine-zipper; the sequence is LVSEIARLRSEILGL. The interval 250-313 is disordered; the sequence is TTAPDLTDVP…SEASVLTENS (64 aa). Residues 262–277 are compositionally biased toward polar residues; it reads ASSSEGPMTPRPQQAL. Residues 283–305 are compositionally biased toward basic and acidic residues; that stretch reads DPLHLEPSRADGSTDHSVRRDSE.

This sequence belongs to the bZIP family. ATF subfamily.

The protein localises to the nucleus. Its function is as follows. Transcription factor that acts as a key player in the regulatory circuit that integrates secondary metabolism and cellular response to oxidative stress. Regulates the genes involved in development, as well as osmotic, oxidative, and cell wall stresses. Participates in the caspofungin paradoxical effect (CPE), where fungi grow beyond the minimum inhibitory concentration of caspofungin. Plays a role in virulence. The protein is Basic leucine zipper (bZIP) transcription factor atfB of Aspergillus fumigatus (strain ATCC MYA-4609 / CBS 101355 / FGSC A1100 / Af293) (Neosartorya fumigata).